The chain runs to 951 residues: Leucine-rich repeat-containing G-protein coupled receptor 4 (951 aa).

An N-terminal signal peptide occupies residues 1 to 24 (MPGPLRLLCFFALGLLGSAGPSGA). One can recognise an LRRNT domain in the interval 25-57 (APPLCAAPCSCDGDRRVDCSGKGLTAVPEGLSA). Topologically, residues 25–544 (APPLCAAPCS…LLGSWMIRLT (520 aa)) are extracellular. 2 disulfides stabilise this stretch: Cys-29/Cys-35 and Cys-33/Cys-43. LRR repeat units lie at residues 58 to 79 (FTQALDISMNNITQLPEDAFKN), 82 to 103 (FLEELQLAGNDLSFIHPKALSG), 106 to 127 (ELKVLTLQNNQLKTVPSEAIRG), 130 to 151 (ALQSLRLDANHITSVPEDSFEG), 154 to 177 (QLRHLWLDDNILTEVPVRPLSNLP), 178 to 199 (TLQALTLALNNISSIPDFAFTN), 202 to 223 (SLVVLHLHNNKIKSLSQHCFDG), 226 to 247 (NLETLDLNYNNLDEFPQAIKAL), 249 to 270 (SLKELGFHSNSISVIPDGAFAG), 273 to 294 (LLRTIHLYDNPLSFVGNSAFHN), 320 to 341 (HLESLTLTGTKISSIPDDLCQN), 344 to 365 (MLRTLDLSYNDIRDLPSFNGCR), 366 to 387 (ALEEISLQRNQISLIKETTFQG), 390 to 411 (SLRILDLSRNLIREIHSGAFAK), and 414 to 435 (TITNLDVSFNELTSFPTEGLNG). Asn-68 carries N-linked (GlcNAc...) asparagine glycosylation. Asn-188 and Asn-199 each carry an N-linked (GlcNAc...) asparagine glycan. Asn-294 carries an N-linked (GlcNAc...) asparagine glycan. An intrachain disulfide couples Cys-339 to Cys-364. Disulfide bonds link Cys-470/Cys-522 and Cys-471/Cys-476. Residues 487–512 (NSPQDHSVTKEKGATDAANATSTAES) are disordered. A compositionally biased stretch (low complexity) spans 501–510 (TDAANATSTA). Asn-505 is a glycosylation site (N-linked (GlcNAc...) asparagine). The chain crosses the membrane as a helical span at residues 545 to 565 (VWFIFLVALLFNLLVILTVFA). At 566-575 (SCSSLPASKL) the chain is on the cytoplasmic side. The helical transmembrane segment at 576-596 (FIGLISVSNLLMGIYTGILTF) threads the bilayer. Topologically, residues 597 to 619 (LDAVSWGRFAEFGIWWETGSGCK) are extracellular. Residues Cys-618 and Cys-693 are joined by a disulfide bond. A helical transmembrane segment spans residues 620 to 640 (VAGSLAVFSSESAVFLLTLAA). The Cytoplasmic portion of the chain corresponds to 641-661 (VERSVFAKDVMKNGKSSHLRQ). The chain crosses the membrane as a helical span at residues 662 to 682 (FQVAALVALLGAAIAGCFPLF). Residues 683-703 (HGGQYSASPLCLPFPTGETPS) are Extracellular-facing. A helical membrane pass occupies residues 704–724 (LGFTVTLVLLNSLAFLLMAII). The Cytoplasmic portion of the chain corresponds to 725–756 (YTKLYCNLEKEDPSENSQSSMIKHVAWLIFTN). The chain crosses the membrane as a helical span at residues 757–777 (CIFFCPVAFFSFAPLITAISI). Over 778 to 783 (SPEIMK) the chain is Extracellular. A helical transmembrane segment spans residues 784–804 (SVTLIFFPLPACLNPVLYVFF). Residues 805-951 (NPKFKDDWKL…YAYNLPRVRD (147 aa)) lie on the Cytoplasmic side of the membrane. Ser-920 bears the Phosphoserine mark.

The protein belongs to the G-protein coupled receptor 1 family.

The protein localises to the cell membrane. In terms of biological role, receptor for R-spondins that potentiates the canonical Wnt signaling pathway and is involved in the formation of various organs. Upon binding to R-spondins (RSPO1, RSPO2, RSPO3 or RSPO4), associates with phosphorylated LRP6 and frizzled receptors that are activated by extracellular Wnt receptors, triggering the canonical Wnt signaling pathway to increase expression of target genes. In contrast to classical G-protein coupled receptors, does not activate heterotrimeric G-proteins to transduce the signal. Its function as activator of the Wnt signaling pathway is required for the development of various organs, including liver, kidney, intestine, bone, reproductive tract and eye. May also act as a receptor for norrin (NDP), such results however require additional confirmation in vivo. Required during spermatogenesis to activate the Wnt signaling pathway in peritubular myoid cells. Required for the maintenance of intestinal stem cells and Paneth cell differentiation in postnatal intestinal crypts. Acts as a regulator of bone formation and remodeling. Involved in kidney development; required for maintaining the ureteric bud in an undifferentiated state. Involved in the development of the anterior segment of the eye. Required during erythropoiesis. Also acts as a negative regulator of innate immunity by inhibiting TLR2/TLR4 associated pattern-recognition and pro-inflammatory cytokine production. Plays an important role in regulating the circadian rhythms of plasma lipids, partially through regulating the rhythmic expression of MTTP. Required for proper development of GnRH neurons (gonadotropin-releasing hormone expressing neurons) that control the release of reproductive hormones from the pituitary gland. This Mus musculus (Mouse) protein is Leucine-rich repeat-containing G-protein coupled receptor 4 (Lgr4).